The following is a 1017-amino-acid chain: Multiple C2 domain and transmembrane region protein 14 (1017 aa).

In terms of domain architecture, C2 1 spans 1–110 (MADNVLRKLI…ASAGSETLVY (110 aa)). Residues 139-231 (AAPAATEPKP…PAEVKNPPIP (93 aa)) are disordered. The span at 141 to 153 (PAATEPKPEAAAA) shows a compositional bias: low complexity. A compositionally biased stretch (basic and acidic residues) spans 154–213 (TEEKPPEIAKAEDGKKETEAAKTEEKKEGDKKEEEKPKEEAKPDEKKPDAPPDTKAKKPD). A compositionally biased stretch (pro residues) spans 217 to 231 (APPPPPAEVKNPPIP). C2 domains follow at residues 258-387 (DLEL…PQWY), 420-554 (DSGG…SRWF), and 587-714 (VTSD…LNSY). Positions 296, 299, 352, 355, and 359 each coordinate Ca(2+). Helical transmembrane passes span 851–871 (VAIV…AFLI) and 957–977 (ATCI…IVPF).

This sequence belongs to the MCTP family. Ca(2+) serves as cofactor. As to expression, expressed in incipient leaf primordia and in roots meristems. Observed in flowers.

It is found in the membrane. The protein localises to the vesicle. It localises to the golgi apparatus membrane. Functionally, may function as a signaling molecule by regulating the trafficking of other regulators. This Arabidopsis thaliana (Mouse-ear cress) protein is Multiple C2 domain and transmembrane region protein 14.